Consider the following 379-residue polypeptide: Cytochrome b (379 aa).

4 consecutive transmembrane segments (helical) span residues 33-53 (FGSLLGLCLISQILTGLFLAM), 77-98 (WLIRNLHANGASFFFICLYLHI), 113-133 (WNIGVVLFLLVMMTAFVGYVL), and 178-198 (FFAFHFLFPFVVAGATMLHLL). Heme b-binding residues include histidine 83 and histidine 97. The heme b site is built by histidine 182 and histidine 196. Histidine 201 lines the a ubiquinone pocket. 4 consecutive transmembrane segments (helical) span residues 226–246 (YKDLLGFIIMLTALTMLALFY), 288–308 (LGGVLALLSSILVLMVVPILH), 320–340 (ASQLLFWILVADMLVLTWIGG), and 347–367 (YIIIGQVASVLYFSLFLVLNP).

Belongs to the cytochrome b family. As to quaternary structure, the cytochrome bc1 complex contains 3 respiratory subunits (MT-CYB, CYC1 and UQCRFS1), 2 core proteins (UQCRC1 and UQCRC2) and probably 6 low-molecular weight proteins. It depends on heme b as a cofactor.

The protein localises to the mitochondrion inner membrane. Its function is as follows. Component of the ubiquinol-cytochrome c reductase complex (complex III or cytochrome b-c1 complex) that is part of the mitochondrial respiratory chain. The b-c1 complex mediates electron transfer from ubiquinol to cytochrome c. Contributes to the generation of a proton gradient across the mitochondrial membrane that is then used for ATP synthesis. This is Cytochrome b (mt-cyb) from Anguilla rostrata (American eel).